The primary structure comprises 253 residues: Triosephosphate isomerase (253 aa).

Residue 9-11 coordinates substrate; sequence NWK. The active-site Electrophile is H94. E163 serves as the catalytic Proton acceptor. Residues G169, S209, and 230–231 each bind substrate; that span reads GG.

This sequence belongs to the triosephosphate isomerase family. As to quaternary structure, homodimer.

The protein localises to the cytoplasm. It carries out the reaction D-glyceraldehyde 3-phosphate = dihydroxyacetone phosphate. It participates in carbohydrate biosynthesis; gluconeogenesis. The protein operates within carbohydrate degradation; glycolysis; D-glyceraldehyde 3-phosphate from glycerone phosphate: step 1/1. In terms of biological role, involved in the gluconeogenesis. Catalyzes stereospecifically the conversion of dihydroxyacetone phosphate (DHAP) to D-glyceraldehyde-3-phosphate (G3P). The chain is Triosephosphate isomerase from Dehalococcoides mccartyi (strain CBDB1).